Reading from the N-terminus, the 132-residue chain is Holo-[acyl-carrier-protein] synthase (132 aa).

Residues D8 and E62 each contribute to the Mg(2+) site.

It belongs to the P-Pant transferase superfamily. AcpS family. Requires Mg(2+) as cofactor.

It is found in the cytoplasm. The catalysed reaction is apo-[ACP] + CoA = holo-[ACP] + adenosine 3',5'-bisphosphate + H(+). In terms of biological role, transfers the 4'-phosphopantetheine moiety from coenzyme A to a Ser of acyl-carrier-protein. The chain is Holo-[acyl-carrier-protein] synthase from Polaromonas sp. (strain JS666 / ATCC BAA-500).